The sequence spans 162 residues: Caveolin-2 (162 aa).

At 1–86 (MGLETEKADV…FEISKYVVYK (86 aa)) the chain is on the cytoplasmic side. Position 19 is a phosphotyrosine; by SRC (Tyr19). Ser20 and Ser23 each carry phosphoserine. Tyr27 carries the phosphotyrosine; by SRC modification. Ser36 carries the post-translational modification Phosphoserine. The helical intramembrane region spans 87–107 (FLTVFLAIPLAFAAGILFATL). Residues 108–162 (SCLHIWIIMPFVKTCLMVLPSVQTVWKTVTDVVIAPLCASVGRSFSSVSLQLSHD) lie on the Cytoplasmic side of the membrane.

This sequence belongs to the caveolin family. Monomer or homodimer. Interacts with CAV1; the interaction forms a stable heterooligomeric complex that is required for targeting to lipid rafts and for caveolae formation. Tyrosine phosphorylated forms do not form heterooligomers with the Tyr-19-phosphorylated form existing as a monomer or dimer, and the Tyr-27-form as a monomer only. Interacts (tyrosine phosphorylated form) with the SH2 domain-containing proteins, RASA1, NCK1 and SRC. Interacts (tyrosine phosphorylated form) with INSR, the interaction (Tyr-27-phosphorylated form) is increased on insulin stimulation. Interacts (Tyr-19 phosphorylated form) with MAPK1 (phosphorylated form); the interaction, promoted by insulin, leads to nuclear location and MAPK1 activation. Interacts with STAT3; the interaction is increased on insulin-induced tyrosine phosphorylation leading to STAT activation. Post-translationally, phosphorylated on serine and tyrosine residues. CAV1 promotes phosphorylation on Ser-23 which then targets the complex to the plasma membrane, lipid rafts and caveolae. Phosphorylation on Ser-36 appears to modulate mitosis in endothelial cells. Phosphorylation on both Tyr-19 and Tyr-27 is required for insulin-induced 'Ser-727' phosphorylation of STAT3 and its activation. Phosphorylation on Tyr-19 is required for insulin-induced phosphorylation of MAPK1 and DNA binding of STAT3. Tyrosine phosphorylation is induced by both EGF and insulin (By. similarity).

The protein resides in the nucleus. The protein localises to the cytoplasm. Its subcellular location is the golgi apparatus membrane. It localises to the cell membrane. It is found in the membrane. The protein resides in the caveola. May act as a scaffolding protein within caveolar membranes. Interacts directly with G-protein alpha subunits and can functionally regulate their activity. Acts as an accessory protein in conjunction with CAV1 in targeting to lipid rafts and driving caveolae formation. The Ser-36 phosphorylated form has a role in modulating mitosis in endothelial cells. Positive regulator of cellular mitogenesis of the MAPK signaling pathway. Required for the insulin-stimulated nuclear translocation and activation of MAPK1 and STAT3, and the subsequent regulation of cell cycle progression. This is Caveolin-2 (CAV2) from Loxodonta africana (African elephant).